We begin with the raw amino-acid sequence, 515 residues long: Cytosolic Fe-S cluster assembly factor NAR1 homolog (515 aa).

Residues Cys-19, Cys-65, Cys-68, Cys-71, Cys-192, Cys-247, Cys-428, and Cys-432 each coordinate [4Fe-4S] cluster.

The protein belongs to the NARF family.

In terms of biological role, component of the cytosolic Fe/S protein assembly machinery. Required for maturation of extramitochondrial Fe/S proteins. May play a role in the transfer of pre-assembled Fe/S clusters to target apoproteins. This chain is Cytosolic Fe-S cluster assembly factor NAR1 homolog, found in Schizosaccharomyces japonicus (strain yFS275 / FY16936) (Fission yeast).